Reading from the N-terminus, the 231-residue chain is (S)-2-haloacid dehalogenase 4A (231 aa).

Residue aspartate 11 is the Nucleophile of the active site. Residues alanine 12–tyrosine 13, arginine 42, and serine 119–asparagine 120 each bind an (S)-2-haloacid. The tract at residues serine 176–aspartate 181 is important for catalytic activity.

Belongs to the HAD-like hydrolase superfamily. S-2-haloalkanoic acid dehalogenase family.

The enzyme catalyses an (S)-2-haloacid + H2O = a (2R)-2-hydroxycarboxylate + a halide anion + H(+). It catalyses the reaction (S)-2-chloropropanoate + H2O = (R)-lactate + chloride + H(+). Catalyzes the hydrolytic dehalogenation of small (S)-2-haloalkanoic acids to yield the corresponding (R)-2-hydroxyalkanoic acids. Acts on acids of short chain lengths, C(2) to C(4), with inversion of configuration at C-3. Active with 2-halogenated carboxylic acids and converts only the S-isomer (or L-isomer) of 2-chloropropionic acid with inversion of configuration to produce R-lactate (or D-isomer). This Burkholderia cepacia (Pseudomonas cepacia) protein is (S)-2-haloacid dehalogenase 4A.